Consider the following 545-residue polypeptide: Leucine-rich repeat LGI family member 2 (545 aa).

The N-terminal stretch at 1–28 (MALRRGGCGALGLLLLLLGAACLIPRSA) is a signal peptide. The region spanning 29–65 (QVRRLARCPATCSCTKESIICVGSSWVPRIVPGDISS) is the LRRNT domain. The N-linked (GlcNAc...) asparagine glycan is linked to N70. LRR repeat units lie at residues 86–107 (SLQL…AFAG), 110–131 (HLEY…AFRG), and 134–155 (DLTH…VFSD). Residues 167 to 217 (NKFECDCKAKWLYLWLKMTNSTVSDVLCIGPPEYQEKKLNDVTSFDYECTT) enclose the LRRCT domain. N186 carries an N-linked (GlcNAc...) asparagine glycan. EAR repeat units follow at residues 219–261 (DFVV…EWDH), 265–307 (NFRS…KYDE), 311–358 (KFVK…KWNS), 360–403 (GFYS…QWNK), 407–450 (KFVP…RWNS), 452–494 (QFVE…QWDK), and 498–540 (LFKK…EHII). N-linked (GlcNAc...) asparagine glycosylation is present at N271. N-linked (GlcNAc...) asparagine glycosylation occurs at N402.

As to expression, brain, heart and placenta.

It is found in the secreted. Required for the development of soma-targeting inhibitory GABAergic synapses made by parvalbumin-positive basket cells. This chain is Leucine-rich repeat LGI family member 2 (LGI2), found in Homo sapiens (Human).